We begin with the raw amino-acid sequence, 517 residues long: Crotonobetaine/carnitine--CoA ligase (517 aa).

Belongs to the ATP-dependent AMP-binding enzyme family.

It carries out the reaction 4-(trimethylamino)butanoate + ATP + CoA = 4-(trimethylamino)butanoyl-CoA + AMP + diphosphate. It catalyses the reaction crotonobetaine + ATP + CoA = crotonobetainyl-CoA + AMP + diphosphate. The enzyme catalyses (R)-carnitine + ATP + CoA = (R)-carnitinyl-CoA + AMP + diphosphate. It functions in the pathway amine and polyamine metabolism; carnitine metabolism. Catalyzes the transfer of CoA to carnitine, generating the initial carnitinyl-CoA needed for the CaiB reaction cycle. Also has activity toward crotonobetaine and gamma-butyrobetaine. The chain is Crotonobetaine/carnitine--CoA ligase from Escherichia coli O157:H7.